A 279-amino-acid chain; its full sequence is Fatty acid desaturase 4-like 2, chloroplastic (279 aa).

The N-terminal 30 residues, 1 to 30, are a transit peptide targeting the chloroplast; the sequence is MATSLQTKYTLNPITNNIPRSHRPSFLRVT. 3 consecutive transmembrane segments (helical) span residues 68–90, 98–118, and 178–198; these read LWVAAGCTTVFVSFSKSIIGAFG, SLAGFAGYILADLGSGVYHWA, and VVHGFVSMFAFCVLFCQLFHA.

The protein belongs to the fatty acid desaturase CarF family.

It is found in the plastid. The protein localises to the chloroplast membrane. The protein operates within lipid metabolism; fatty acid metabolism. Its function is as follows. Fatty acid desaturase involved in the production of chloroplast-specific phosphatidylglycerol molecular species. Catalyzes the formation of a trans double bond introduced close to the carboxyl group of palmitic acid, which is specifically esterified to the sn-2 glyceryl carbon of phosphatidylglycerol. The chain is Fatty acid desaturase 4-like 2, chloroplastic (FAD4L2) from Arabidopsis thaliana (Mouse-ear cress).